The following is a 670-amino-acid chain: DNA ligase (670 aa).

NAD(+) is bound by residues 32-36, 81-82, and E114; these read DSEYD and SL. The active-site N6-AMP-lysine intermediate is the K116. Residues R137, E174, K291, and K315 each coordinate NAD(+). Residues C409, C412, C427, and C433 each coordinate Zn(2+). The BRCT domain maps to 592–670; the sequence is ASENLFKDKT…EEEFLAQITR (79 aa).

This sequence belongs to the NAD-dependent DNA ligase family. LigA subfamily. It depends on Mg(2+) as a cofactor. Mn(2+) is required as a cofactor.

It catalyses the reaction NAD(+) + (deoxyribonucleotide)n-3'-hydroxyl + 5'-phospho-(deoxyribonucleotide)m = (deoxyribonucleotide)n+m + AMP + beta-nicotinamide D-nucleotide.. In terms of biological role, DNA ligase that catalyzes the formation of phosphodiester linkages between 5'-phosphoryl and 3'-hydroxyl groups in double-stranded DNA using NAD as a coenzyme and as the energy source for the reaction. It is essential for DNA replication and repair of damaged DNA. This is DNA ligase from Haemophilus influenzae (strain PittEE).